We begin with the raw amino-acid sequence, 213 residues long: Ras-related protein Rab-39B (213 aa).

Positions 17, 20, 21, 22, 23, 37, and 40 each coordinate GTP. Position 22 (Ser22) interacts with Mg(2+). Positions 35–43 (QVSDPTVGV) are switch-I. Residues Thr40 and Asp64 each coordinate Mg(2+). Residues Gly67, His123, Lys124, Asp126, Ala154, and Arg155 each coordinate GTP. Residues 67 to 83 (GQERFRSITRAYYRNSV) are switch-II. Ser201 carries the phosphoserine modification. Residues Cys211 and Cys213 are each lipidated (S-geranylgeranyl cysteine). Cys213 is subject to Cysteine methyl ester.

The protein belongs to the small GTPase superfamily. Rab family. Interacts (GDP-bound) with C9orf72; C9orf72 in complex with SMCR8 acts as a GEF for RAB39B. Interacts (in GTP-bound form) with PICK1 (via PDZ domain); a PICK1 homodimer may allow simultaneous association of RAB39B and GRIA2 to PICK1 which is involved in GRIA2 trafficking. Interacts with isoform c of RASSF1; the interaction is strong. Interacts with isoform a of RASSF1; the interaction is weak. Interacts with the DLG4/PSD-95. Interacts (GTP-bound) with HOPS complex components VPS39 and VPS41. The cofactor is Mg(2+).

The protein localises to the cell membrane. It localises to the cytoplasmic vesicle membrane. Its subcellular location is the golgi apparatus. It is found in the cytoplasmic vesicle. The protein resides in the autophagosome membrane. The protein localises to the autolysosome membrane. The enzyme catalyses GTP + H2O = GDP + phosphate + H(+). Its activity is regulated as follows. Regulated by guanine nucleotide exchange factors (GEFs) including C9orf72-SMCR8 complex, which promote the exchange of bound GDP for free GTP. Regulated by GTPase activating proteins (GAPs) which increase the GTP hydrolysis activity. Inhibited by GDP dissociation inhibitors (GDIs). The small GTPases Rab are key regulators of intracellular membrane trafficking, from the formation of transport vesicles to their fusion with membranes. Rabs cycle between an inactive GDP-bound form and an active GTP-bound form that is able to recruit to membranes different sets of downstream effectors directly responsible for vesicle formation, movement, tethering and fusion. RAB39B is involved in autophagy and may function in autophagosome formation. Binds downstream effector PICK1 to ensure selectively GRIA2 exit from the endoplasmic reticulum to the Golgi and to regulate AMPAR composition at the post-synapses and thus synaptic transmission. May regulate the homeostasis of SNCA/alpha-synuclein. The chain is Ras-related protein Rab-39B (RAB39B) from Bos taurus (Bovine).